Consider the following 632-residue polypeptide: DNA mismatch repair protein MutL (632 aa).

The tract at residues 376 to 397 (EQPQAEPRQSFTPGSGAGSGYQ) is disordered.

Belongs to the DNA mismatch repair MutL/HexB family.

In terms of biological role, this protein is involved in the repair of mismatches in DNA. It is required for dam-dependent methyl-directed DNA mismatch repair. May act as a 'molecular matchmaker', a protein that promotes the formation of a stable complex between two or more DNA-binding proteins in an ATP-dependent manner without itself being part of a final effector complex. The protein is DNA mismatch repair protein MutL of Pseudomonas entomophila (strain L48).